Reading from the N-terminus, the 117-residue chain is Immunoglobulin heavy variable 4-28 (117 aa).

An N-terminal signal peptide occupies residues 1–19 (MKHLWFFLLLVAAPRWVLS). A framework-1 region spans residues 20–44 (QVQLQESGPGLVKPSDTLSLTCAVS). The region spanning 20–117 (QVQLQESGPG…VDTAVYYCAR (98 aa)) is the Ig-like domain. Cys41 and Cys115 form a disulfide bridge. A complementarity-determining-1 region spans residues 45 to 53 (GYSISSSNW). Residues 54–70 (WGWIRQPPGKGLEWIGY) form a framework-2 region. The interval 71–77 (IYYSGST) is complementarity-determining-2. A framework-3 region spans residues 78 to 115 (YYNPSLKSRVTMSVDTSKNQFSLKLSSVTAVDTAVYYC). Positions 116 to 117 (AR) are complementarity-determining-3.

In terms of assembly, immunoglobulins are composed of two identical heavy chains and two identical light chains; disulfide-linked.

The protein localises to the secreted. The protein resides in the cell membrane. In terms of biological role, v region of the variable domain of immunoglobulin heavy chains that participates in the antigen recognition. Immunoglobulins, also known as antibodies, are membrane-bound or secreted glycoproteins produced by B lymphocytes. In the recognition phase of humoral immunity, the membrane-bound immunoglobulins serve as receptors which, upon binding of a specific antigen, trigger the clonal expansion and differentiation of B lymphocytes into immunoglobulins-secreting plasma cells. Secreted immunoglobulins mediate the effector phase of humoral immunity, which results in the elimination of bound antigens. The antigen binding site is formed by the variable domain of one heavy chain, together with that of its associated light chain. Thus, each immunoglobulin has two antigen binding sites with remarkable affinity for a particular antigen. The variable domains are assembled by a process called V-(D)-J rearrangement and can then be subjected to somatic hypermutations which, after exposure to antigen and selection, allow affinity maturation for a particular antigen. The polypeptide is Immunoglobulin heavy variable 4-28 (Homo sapiens (Human)).